A 475-amino-acid polypeptide reads, in one-letter code: Glucose-6-phosphate 1-dehydrogenase gcd1 (475 aa).

2 residues coordinate NADP(+): Arg-42 and Lys-146. D-glucose 6-phosphate-binding residues include Lys-146, Glu-214, and Asp-233. His-238 functions as the Proton acceptor in the catalytic mechanism. Lys-332 provides a ligand contact to D-glucose 6-phosphate. NADP(+)-binding residues include Arg-342 and Arg-365.

It belongs to the glucose-6-phosphate dehydrogenase family.

The protein localises to the cytoplasm. It catalyses the reaction D-glucose 6-phosphate + NADP(+) = 6-phospho-D-glucono-1,5-lactone + NADPH + H(+). It participates in carbohydrate degradation; pentose phosphate pathway; D-ribulose 5-phosphate from D-glucose 6-phosphate (oxidative stage): step 1/3. Functionally, catalyzes the rate-limiting step of the oxidative pentose-phosphate pathway, which represents a route for the dissimilation of carbohydrates besides glycolysis. The main function of this enzyme is to provide reducing power (NADPH) and pentose phosphates for fatty acid and nucleic acid synthesis. The polypeptide is Glucose-6-phosphate 1-dehydrogenase gcd1 (Schizosaccharomyces pombe (strain 972 / ATCC 24843) (Fission yeast)).